Here is a 982-residue protein sequence, read N- to C-terminus: Protein lin-10 (982 aa).

Residues Met-1–Pro-16 show a composition bias toward polar residues. 5 disordered regions span residues Met-1 to Pro-55, Gln-119 to Ser-228, Thr-269 to Pro-327, Phe-432 to Asp-511, and Gln-525 to Thr-593. Over residues Lys-33–Glu-44 the composition is skewed to gly residues. The span at Gln-119–Ser-134 shows a compositional bias: low complexity. Polar residues-rich tracts occupy residues Arg-143–Pro-156 and Glu-169–Val-190. The segment covering Gly-211–Ser-228 has biased composition (basic and acidic residues). The span at Ser-301 to Val-318 shows a compositional bias: polar residues. Composition is skewed to low complexity over residues Phe-432–Pro-445 and Pro-454–Leu-464. The segment covering Asn-490–Gln-501 has biased composition (polar residues). Over residues Gln-539–Glu-550 the composition is skewed to low complexity. Over residues Gly-577–Thr-593 the composition is skewed to basic and acidic residues. In terms of domain architecture, PID spans Gly-604–Asp-788. PDZ domains lie at Glu-801–Ser-886 and Glu-892–Ser-968.

In terms of assembly, interacts (via N-terminus) with egl-9 isoform e (via catalytic domain); the interaction regulates its trafficking; the interaction is direct. Interacts with rab-6.2 (in GTP-bound form). Phosphorylated on multiple Ser and Thr residues by cdk-5 which regulates its localization. Post-translationally, may be hydroxylated by egl-9 isoform e on multiple Pro residues which may prevent phosphorylation by cdk-5. In terms of tissue distribution, expressed in vulval epithelial cells and neurons.

It is found in the golgi apparatus. Its subcellular location is the golgi stack membrane. The protein resides in the trans-Golgi network membrane. The protein localises to the cytoplasm. It localises to the synapse. It is found in the perikaryon. Required specifically for the determination of 3 vulval precursor cell fates P5.p, P6.p and P7.p during late second and early third larval stages; required for basolateral localization of receptor tyrosine kinase let-23. Could have a general but redundant role in development, functioning in diverse cell lineages to control cell fates. Regulates the trafficking of the glr-1 subunit of AMPA-type glutamate receptors (AMPRs) in the ventral nerve cord. This may be partly through interacting with the small GTPase rab-6.2 in its active GTP-bound state. The sequence is that of Protein lin-10 from Caenorhabditis elegans.